Here is a 294-residue protein sequence, read N- to C-terminus: MSEFKGCPFSGAASEAGTKAQGEGWHGAQMDFAKDMSYGDYLGLDQILSAQHPLSPDHNEMLFIVQHQTTELWMKLMLHELRAARESVKADSLPPAFKMLTRVSRIMDQLVQAWNVLATMTPPEYSAMRPYLGMSSGFQSFQYREIEFILGNKNAAMLKPHAHRPEHLALVETALKTPSLYDEAIRLMARRGFAVDADCVERDWTQPTAYNASVEAAWLEVYRNPSAHWELYELGEKFVDLEDSFRQWRFRHVTTVERVIGFKRGTGGTEGVSYLRKMLDVVLFPELWKLRTDL.

The tract at residues methionine 1–alanine 20 is disordered. Substrate contacts are provided by residues phenylalanine 63 to histidine 67, tyrosine 125, and arginine 129. Histidine 252 serves as a coordination point for heme. Threonine 266 is a binding site for substrate.

The protein belongs to the tryptophan 2,3-dioxygenase family. Homotetramer. Requires heme as cofactor.

The enzyme catalyses L-tryptophan + O2 = N-formyl-L-kynurenine. It functions in the pathway amino-acid degradation; L-tryptophan degradation via kynurenine pathway; L-kynurenine from L-tryptophan: step 1/2. Its function is as follows. Heme-dependent dioxygenase that catalyzes the oxidative cleavage of the L-tryptophan (L-Trp) pyrrole ring and converts L-tryptophan to N-formyl-L-kynurenine. Catalyzes the oxidative cleavage of the indole moiety. This is Tryptophan 2,3-dioxygenase from Cupriavidus necator (strain ATCC 17699 / DSM 428 / KCTC 22496 / NCIMB 10442 / H16 / Stanier 337) (Ralstonia eutropha).